A 441-amino-acid polypeptide reads, in one-letter code: Damage-control phosphatase ARMT1 (441 aa).

Alanine 2 bears the N-acetylalanine mark. Lysine 40 is modified (N6-acetyllysine). Phosphoserine is present on serine 102. Mn(2+) is bound by residues aspartate 253 and asparagine 254. Residue 253–254 (DN) participates in substrate binding. Residues glutamate 258 and aspartate 291 each coordinate S-adenosyl-L-methionine. Residue aspartate 291 participates in Mn(2+) binding. Substrate is bound by residues 367–371 (DLNYR) and lysine 404. The Subfamily III RTxK motif motif lies at 401–404 (RTLK).

The protein belongs to the damage-control phosphatase family. Sugar phosphate phosphatase III subfamily. It depends on Mn(2+) as a cofactor. Ni(2+) is required as a cofactor. Post-translationally, automethylated.

It catalyses the reaction beta-D-fructose 1-phosphate + H2O = D-fructose + phosphate. The catalysed reaction is beta-D-fructose 6-phosphate = dihydroxyacetone + D-glyceraldehyde 3-phosphate. The enzyme catalyses L-glutamyl-[protein] + S-adenosyl-L-methionine = [protein]-L-glutamate 5-O-methyl ester + S-adenosyl-L-homocysteine. Its function is as follows. Metal-dependent phosphatase that shows phosphatase activity against several substrates, including fructose-1-phosphate and fructose-6-phosphate. Its preference for fructose-1-phosphate, a strong glycating agent that causes DNA damage rather than a canonical yeast metabolite, suggests a damage-control function in hexose phosphate metabolism. Has also been shown to have O-methyltransferase activity that methylates glutamate residues of target proteins to form gamma-glutamyl methyl ester residues. Possibly methylates PCNA, suggesting it is involved in the DNA damage response. In Homo sapiens (Human), this protein is Damage-control phosphatase ARMT1.